A 158-amino-acid polypeptide reads, in one-letter code: Cell number regulator 11 (158 aa).

2 helical membrane-spanning segments follow: residues 49 to 67 and 78 to 94; these read FGDLHTCCLTLWCPCVTFG and TCCMSGTLYYLLSTIGW.

This sequence belongs to the cornifelin family.

The protein resides in the membrane. The sequence is that of Cell number regulator 11 (CNR11) from Zea mays (Maize).